A 597-amino-acid polypeptide reads, in one-letter code: MSTQYETQGYTINNAGRRLVVDPITRIEGHMRCEVNINDQNVITNAVSCGTMFRGLEIILQGRDPRDAWAFVERICGVCTGVHALASVYAIEDAIGIKVPDNANIIRNIMLATLWCHDHLVHFYQLAGMDWIDVLDALKADPRKTSELAQSLSSWPKSSPGYFFDVQNRLKKFVEGGQLGIFRNGYWGHPQYKLPPEANLMGFAHYLEALDFQREIVKIHAVFGGKNPHPNWIVGGMPCAINIDESGAVGAVNMERLNLVQSIITRTADFINNVMIPDALAIGQFNKPWSEIGTGLSDKCVLSYGAFPDIANDFGEKSLLMPGGAVINGDFNNVLPVDLVDPQQVQEFVDHAWYRYPNDQVGRHPFDGITDPWYNPGDVKGSDTNIQQLNEQERYSWIKAPRWRGNAMEVGPLARTLIAYHKGDAATVESVDRMMSALNLPLSGIQSTLGRILCRAHEAQWAAGKLQYFFDKLMTNLKNGNLATASTEKWEPATWPTECRGVGFTEAPRGALGHWAAIRDGKIDLYQCVVPTTWNASPRDPKGQIGAYEAALMNTKMAIPEQPLEILRTLHSFDPCLACSTHVLGDDGSELISVQVR.

Positions 76, 79, 576, and 579 each coordinate Ni(2+).

This sequence belongs to the [NiFe]/[NiFeSe] hydrogenase large subunit family. In terms of assembly, heterodimer of a large and a small subunit. It depends on Ni(2+) as a cofactor.

The protein localises to the cell membrane. The catalysed reaction is H2 + A = AH2. This is one of three E.coli hydrogenases synthesized in response to different physiological conditions. HYD1 is believed to have a role in hydrogen cycling during fermentative growth. The sequence is that of Hydrogenase-1 large chain (hyaB) from Escherichia coli (strain K12).